Reading from the N-terminus, the 595-residue chain is Glutamyl-tRNA(Gln) amidotransferase subunit B, mitochondrial (595 aa).

The transit peptide at 1–72 (MPRLWYSRYL…RAKSQSRNGR (72 aa)) directs the protein to the mitochondrion.

This sequence belongs to the GatB/GatE family. GatB subfamily. In terms of assembly, subunit of the heterotrimeric GatCAB amidotransferase (AdT) complex, composed of A, B and C subunits.

It is found in the mitochondrion. The catalysed reaction is L-glutamyl-tRNA(Gln) + L-glutamine + ATP + H2O = L-glutaminyl-tRNA(Gln) + L-glutamate + ADP + phosphate + H(+). In terms of biological role, allows the formation of correctly charged Gln-tRNA(Gln) through the transamidation of misacylated Glu-tRNA(Gln) in the mitochondria. The reaction takes place in the presence of glutamine and ATP through an activated gamma-phospho-Glu-tRNA(Gln). This Talaromyces marneffei (strain ATCC 18224 / CBS 334.59 / QM 7333) (Penicillium marneffei) protein is Glutamyl-tRNA(Gln) amidotransferase subunit B, mitochondrial.